Reading from the N-terminus, the 410-residue chain is DNA replication and repair protein RecF (410 aa).

30–37 (GPNGHGKT) contributes to the ATP binding site.

This sequence belongs to the RecF family.

The protein localises to the cytoplasm. The RecF protein is involved in DNA metabolism; it is required for DNA replication and normal SOS inducibility. RecF binds preferentially to single-stranded, linear DNA. It also seems to bind ATP. The sequence is that of DNA replication and repair protein RecF from Rhodococcus jostii (strain RHA1).